The following is a 117-amino-acid chain: Large ribosomal subunit protein uL18 (117 aa).

This sequence belongs to the universal ribosomal protein uL18 family. As to quaternary structure, part of the 50S ribosomal subunit; part of the 5S rRNA/L5/L18/L25 subcomplex. Contacts the 5S and 23S rRNAs.

Functionally, this is one of the proteins that bind and probably mediate the attachment of the 5S RNA into the large ribosomal subunit, where it forms part of the central protuberance. This Blochmanniella pennsylvanica (strain BPEN) protein is Large ribosomal subunit protein uL18.